Here is a 296-residue protein sequence, read N- to C-terminus: Thymidylate synthase (296 aa).

Residues R24 and 151–152 (RR) contribute to the dUMP site. C171 serves as the catalytic Nucleophile. DUMP contacts are provided by residues 197–200 (RSAD), N208, and 238–240 (HVY). Residue D200 participates in (6R)-5,10-methylene-5,6,7,8-tetrahydrofolate binding.

This sequence belongs to the thymidylate synthase family. In terms of assembly, homodimer.

It catalyses the reaction dUMP + (6R)-5,10-methylene-5,6,7,8-tetrahydrofolate = 7,8-dihydrofolate + dTMP. The protein operates within pyrimidine metabolism; dTTP biosynthesis. The polypeptide is Thymidylate synthase (tms1) (Agaricus bisporus (White button mushroom)).